Here is a 62-residue protein sequence, read N- to C-terminus: Large ribosomal subunit protein uL30 (62 aa).

Belongs to the universal ribosomal protein uL30 family. In terms of assembly, part of the 50S ribosomal subunit.

This chain is Large ribosomal subunit protein uL30, found in Roseobacter denitrificans (strain ATCC 33942 / OCh 114) (Erythrobacter sp. (strain OCh 114)).